The following is a 258-amino-acid chain: Trans-aconitate 2-methyltransferase (258 aa).

Belongs to the methyltransferase superfamily. Tam family.

It is found in the cytoplasm. The catalysed reaction is trans-aconitate + S-adenosyl-L-methionine = (E)-3-(methoxycarbonyl)pent-2-enedioate + S-adenosyl-L-homocysteine. Functionally, catalyzes the S-adenosylmethionine monomethyl esterification of trans-aconitate. This Yersinia pestis bv. Antiqua (strain Antiqua) protein is Trans-aconitate 2-methyltransferase.